The primary structure comprises 544 residues: Methionine--tRNA ligase (544 aa).

The 'HIGH' region motif lies at 10-20; it reads PYANGSLHLGH. The Zn(2+) site is built by Cys141, Cys144, Cys153, and Cys156. The 'KMSKS' region motif lies at 329–333; that stretch reads KLSTS. Residue Thr332 coordinates ATP.

Belongs to the class-I aminoacyl-tRNA synthetase family. MetG type 1 subfamily. As to quaternary structure, monomer. Requires Zn(2+) as cofactor.

It localises to the cytoplasm. The catalysed reaction is tRNA(Met) + L-methionine + ATP = L-methionyl-tRNA(Met) + AMP + diphosphate. Is required not only for elongation of protein synthesis but also for the initiation of all mRNA translation through initiator tRNA(fMet) aminoacylation. The polypeptide is Methionine--tRNA ligase (Bacillus cereus (strain 03BB102)).